A 688-amino-acid polypeptide reads, in one-letter code: Probable xyloglucan glycosyltransferase 7 (688 aa).

Positions 1 to 25 (MAPSWWGRSGGGGVGNGGGTPVVVK) are disordered. Positions 8 to 20 (RSGGGGVGNGGGT) are enriched in gly residues. A run of 2 helical transmembrane segments spans residues 121–141 (VSLV…LQGW) and 183–203 (VALF…CFWI). Aspartate 269 is an active-site residue. Residues aspartate 328 and aspartate 330 each coordinate substrate. Residue aspartate 422 is part of the active site. Transmembrane regions (helical) follow at residues 500–520 (LILP…TMFV) and 525–545 (LPAW…ILPA). Residues 604 to 635 (HSKQQRVGSAPNLDALTKEESNPKKDSKKKKH) are disordered. Residues 619-628 (LTKEESNPKK) are compositionally biased toward basic and acidic residues. 2 consecutive transmembrane segments (helical) span residues 638 to 657 (IYRK…ARSL) and 663 to 683 (IHFY…LDLI).

It belongs to the glycosyltransferase 2 family. Plant cellulose synthase-like C subfamily.

The protein resides in the golgi apparatus membrane. Functionally, probable beta-1,4-glucan synthase rather involved in the synthesis of the xyloglucan backbone than cellulose. Seems to work simultaneously with xyloglucan 6-xylosyltransferase. Xyloglucan is a noncellulosic polysaccharides of plant cell wall and consists of a glucan backbone substituted by xylose, galactose and fucose. This is Probable xyloglucan glycosyltransferase 7 (CSLC7) from Oryza sativa subsp. japonica (Rice).